A 388-amino-acid chain; its full sequence is Succinate--CoA ligase [ADP-forming] subunit beta (388 aa).

Positions 9–244 constitute an ATP-grasp domain; that stretch reads KQLFAEYGLP…PSQDDPREAH (236 aa). Residues K46, 53-55, E99, T102, and E107 each bind ATP; that span reads GRG. N199 and D213 together coordinate Mg(2+). Residues N264 and 321 to 323 contribute to the substrate site; that span reads GIV.

Belongs to the succinate/malate CoA ligase beta subunit family. In terms of assembly, heterotetramer of two alpha and two beta subunits. The cofactor is Mg(2+).

The enzyme catalyses succinate + ATP + CoA = succinyl-CoA + ADP + phosphate. The catalysed reaction is GTP + succinate + CoA = succinyl-CoA + GDP + phosphate. It functions in the pathway carbohydrate metabolism; tricarboxylic acid cycle; succinate from succinyl-CoA (ligase route): step 1/1. Its function is as follows. Succinyl-CoA synthetase functions in the citric acid cycle (TCA), coupling the hydrolysis of succinyl-CoA to the synthesis of either ATP or GTP and thus represents the only step of substrate-level phosphorylation in the TCA. The beta subunit provides nucleotide specificity of the enzyme and binds the substrate succinate, while the binding sites for coenzyme A and phosphate are found in the alpha subunit. The sequence is that of Succinate--CoA ligase [ADP-forming] subunit beta from Aeromonas hydrophila subsp. hydrophila (strain ATCC 7966 / DSM 30187 / BCRC 13018 / CCUG 14551 / JCM 1027 / KCTC 2358 / NCIMB 9240 / NCTC 8049).